Here is a 459-residue protein sequence, read N- to C-terminus: Cysteine--tRNA ligase (459 aa).

Cys28 serves as a coordination point for Zn(2+). The short motif at 30–40 (VTIYDLCHIGH) is the 'HIGH' region element. Zn(2+)-binding residues include Cys209, His234, and Glu238. The 'KMSKS' region motif lies at 266–270 (KMSKS). Lys269 contacts ATP.

Belongs to the class-I aminoacyl-tRNA synthetase family. Monomer. It depends on Zn(2+) as a cofactor.

The protein resides in the cytoplasm. The catalysed reaction is tRNA(Cys) + L-cysteine + ATP = L-cysteinyl-tRNA(Cys) + AMP + diphosphate. The sequence is that of Cysteine--tRNA ligase from Shewanella pealeana (strain ATCC 700345 / ANG-SQ1).